Reading from the N-terminus, the 93-residue chain is Small ribosomal subunit protein bS18 (93 aa).

The protein belongs to the bacterial ribosomal protein bS18 family. Part of the 30S ribosomal subunit. Forms a tight heterodimer with protein bS6.

Binds as a heterodimer with protein bS6 to the central domain of the 16S rRNA, where it helps stabilize the platform of the 30S subunit. The protein is Small ribosomal subunit protein bS18 of Delftia acidovorans (strain DSM 14801 / SPH-1).